The following is a 223-amino-acid chain: GrpE protein homolog, mitochondrial (223 aa).

This sequence belongs to the GrpE family. Component of the PAM complex, at least composed of mtHsp70, mge1, tim44, pam16, pam17 and pam18.

The protein resides in the mitochondrion matrix. Its function is as follows. Essential component of the PAM complex, a complex required for the translocation of transit peptide-containing proteins from the inner membrane into the mitochondrial matrix in an ATP-dependent manner. Seems to control the nucleotide-dependent binding of ssc1 to substrate proteins. This chain is GrpE protein homolog, mitochondrial (mge1), found in Schizosaccharomyces pombe (strain 972 / ATCC 24843) (Fission yeast).